The sequence spans 318 residues: Beta-ketoacyl-[acyl-carrier-protein] synthase III (318 aa).

Catalysis depends on residues cysteine 112 and histidine 245. The segment at 246–250 (QANLR) is ACP-binding. Asparagine 275 is a catalytic residue.

It belongs to the thiolase-like superfamily. FabH family. Homodimer.

It localises to the cytoplasm. It catalyses the reaction malonyl-[ACP] + acetyl-CoA + H(+) = 3-oxobutanoyl-[ACP] + CO2 + CoA. It participates in lipid metabolism; fatty acid biosynthesis. In terms of biological role, catalyzes the condensation reaction of fatty acid synthesis by the addition to an acyl acceptor of two carbons from malonyl-ACP. Catalyzes the first condensation reaction which initiates fatty acid synthesis and may therefore play a role in governing the total rate of fatty acid production. Possesses both acetoacetyl-ACP synthase and acetyl transacylase activities. Its substrate specificity determines the biosynthesis of branched-chain and/or straight-chain of fatty acids. This Blochmanniella floridana protein is Beta-ketoacyl-[acyl-carrier-protein] synthase III.